Here is a 174-residue protein sequence, read N- to C-terminus: Shikimate kinase (174 aa).

Residue 14–19 (GAGKST) participates in ATP binding. Residue Ser-18 participates in Mg(2+) binding. Substrate contacts are provided by Asp-36, Arg-60, and Gly-82. Arg-120 lines the ATP pocket. Arg-141 provides a ligand contact to substrate. Arg-158 provides a ligand contact to ATP.

The protein belongs to the shikimate kinase family. Monomer. It depends on Mg(2+) as a cofactor.

It localises to the cytoplasm. It carries out the reaction shikimate + ATP = 3-phosphoshikimate + ADP + H(+). It participates in metabolic intermediate biosynthesis; chorismate biosynthesis; chorismate from D-erythrose 4-phosphate and phosphoenolpyruvate: step 5/7. Catalyzes the specific phosphorylation of the 3-hydroxyl group of shikimic acid using ATP as a cosubstrate. The sequence is that of Shikimate kinase from Buchnera aphidicola subsp. Baizongia pistaciae (strain Bp).